The sequence spans 265 residues: PBSX phage terminase small subunit (265 aa).

The disordered stretch occupies residues lysine 241–serine 265.

To B.subtilis YqaS and B.subtilis phage SPP1 terminase small subunit. Dimer of a small and a large subunit.

Functions as a terminase. This is PBSX phage terminase small subunit (xtmA) from Bacillus subtilis (strain 168).